A 482-amino-acid polypeptide reads, in one-letter code: Dual specificity protein phosphatase 10 (482 aa).

A Rhodanese domain is found at 168 to 285 (PSQGPVIIDC…FKQNHENLCD (118 aa)). The interaction with MAP kinases stretch occupies residues 199–215 (KISRRRLQQGKITVLDL). The region spanning 321 to 464 (ELTPILPFLF…LLEFEEDLNN (144 aa)) is the Tyrosine-protein phosphatase domain. C408 acts as the Phosphocysteine intermediate in catalysis.

This sequence belongs to the protein-tyrosine phosphatase family. Non-receptor class dual specificity subfamily. As to quaternary structure, monomer. Interacts with MAPK14.

The protein localises to the cytoplasm. Its subcellular location is the nucleus. It catalyses the reaction O-phospho-L-tyrosyl-[protein] + H2O = L-tyrosyl-[protein] + phosphate. It carries out the reaction O-phospho-L-seryl-[protein] + H2O = L-seryl-[protein] + phosphate. The catalysed reaction is O-phospho-L-threonyl-[protein] + H2O = L-threonyl-[protein] + phosphate. Functionally, protein phosphatase involved in the inactivation of MAP kinases. Has a specificity for the MAPK11/MAPK12/MAPK13/MAPK14 subfamily. It preferably dephosphorylates p38. The protein is Dual specificity protein phosphatase 10 (DUSP10) of Bos taurus (Bovine).